A 26-amino-acid polypeptide reads, in one-letter code: ATP synthase subunit gamma, mitochondrial (26 aa).

The protein belongs to the ATPase gamma chain family. In terms of assembly, F-type ATPases have 2 components, CF(1) - the catalytic core - and CF(0) - the membrane proton channel. CF(1) has five subunits: alpha(3), beta(3), gamma(1), delta(1), epsilon(1). CF(0) has three main subunits: a, b and c.

It localises to the mitochondrion. Its subcellular location is the mitochondrion inner membrane. In terms of biological role, mitochondrial membrane ATP synthase (F(1)F(0) ATP synthase or Complex V) produces ATP from ADP in the presence of a proton gradient across the membrane which is generated by electron transport complexes of the respiratory chain. F-type ATPases consist of two structural domains, F(1) - containing the extramembraneous catalytic core, and F(0) - containing the membrane proton channel, linked together by a central stalk and a peripheral stalk. During catalysis, ATP synthesis in the catalytic domain of F(1) is coupled via a rotary mechanism of the central stalk subunits to proton translocation. Part of the complex F(1) domain and the central stalk which is part of the complex rotary element. The gamma subunit protrudes into the catalytic domain formed of alpha(3)beta(3). Rotation of the central stalk against the surrounding alpha(3)beta(3) subunits leads to hydrolysis of ATP in three separate catalytic sites on the beta subunits. In Spinacia oleracea (Spinach), this protein is ATP synthase subunit gamma, mitochondrial (ATPC).